The sequence spans 150 residues: Endoribonuclease YbeY (150 aa).

3 residues coordinate Zn(2+): H112, H116, and H122.

Belongs to the endoribonuclease YbeY family. Requires Zn(2+) as cofactor.

It is found in the cytoplasm. Its function is as follows. Single strand-specific metallo-endoribonuclease involved in late-stage 70S ribosome quality control and in maturation of the 3' terminus of the 16S rRNA. The polypeptide is Endoribonuclease YbeY (Geobacter metallireducens (strain ATCC 53774 / DSM 7210 / GS-15)).